Consider the following 432-residue polypeptide: Adenylosuccinate synthetase (432 aa).

Residues 13–19 (GDEGKGK) and 41–43 (GHT) each bind GTP. Catalysis depends on Asp-14, which acts as the Proton acceptor. Positions 14 and 41 each coordinate Mg(2+). IMP contacts are provided by residues 14 to 17 (DEGK), 39 to 42 (NAGH), Thr-130, Arg-144, Gln-225, Thr-240, and Arg-304. Catalysis depends on His-42, which acts as the Proton donor. 300–306 (ATTGRRR) contributes to the substrate binding site. Residues Arg-306, 332-334 (KLD), and 415-417 (STG) each bind GTP.

It belongs to the adenylosuccinate synthetase family. Homodimer. Mg(2+) is required as a cofactor.

The protein localises to the cytoplasm. It carries out the reaction IMP + L-aspartate + GTP = N(6)-(1,2-dicarboxyethyl)-AMP + GDP + phosphate + 2 H(+). Its pathway is purine metabolism; AMP biosynthesis via de novo pathway; AMP from IMP: step 1/2. Functionally, plays an important role in the de novo pathway of purine nucleotide biosynthesis. Catalyzes the first committed step in the biosynthesis of AMP from IMP. In Sodalis glossinidius (strain morsitans), this protein is Adenylosuccinate synthetase.